Consider the following 620-residue polypeptide: Cell fusion protein cfr1 (620 aa).

In terms of domain architecture, Fibronectin type-III spans Leu79–Met169. The region spanning Leu167–Ile256 is the BRCT domain. Disordered stretches follow at residues Gln287 to Ala566 and Lys588 to Asp620. The segment covering Ala303 to Asn314 has biased composition (polar residues). Residues Ser315–Ala330 show a composition bias toward low complexity. The segment covering Ser352–Gln375 has biased composition (polar residues). A compositionally biased stretch (basic and acidic residues) spans Met382–Asn392. Residues Leu393–Glu406 show a composition bias toward polar residues. Over residues Asn424 to Thr434 the composition is skewed to low complexity. Positions Asn445 to Val468 are enriched in polar residues. Residues Ala472–Glu484 show a composition bias toward acidic residues. Over residues Asn506–Gly515 the composition is skewed to polar residues. The segment covering Thr517–Pro537 has biased composition (basic and acidic residues).

This sequence belongs to the CHS5 family.

It localises to the golgi apparatus. In terms of biological role, required for cell fusion, independently of fus1. Appears to have a role in transporting proteins that are involved in mating. May act as a scaffold to retain cell fusion proteins in the cisternae of the Golgi. Degraded at the onset of mating and this leads to release of cell fusion proteins. The chain is Cell fusion protein cfr1 (cfr1) from Schizosaccharomyces pombe (strain 972 / ATCC 24843) (Fission yeast).